The sequence spans 652 residues: DNA ligase (652 aa).

NAD(+) contacts are provided by residues 30 to 34 (DEVYD), 79 to 80 (SL), and Glu-108. Lys-110 functions as the N6-AMP-lysine intermediate in the catalytic mechanism. The NAD(+) site is built by Arg-131, Glu-165, Lys-280, and Lys-304. 4 residues coordinate Zn(2+): Cys-398, Cys-401, Cys-414, and Cys-419. The region spanning 574-652 (AKENPFKGKS…DEMRSKIEQA (79 aa)) is the BRCT domain.

It belongs to the NAD-dependent DNA ligase family. LigA subfamily. The cofactor is Mg(2+). It depends on Mn(2+) as a cofactor.

It carries out the reaction NAD(+) + (deoxyribonucleotide)n-3'-hydroxyl + 5'-phospho-(deoxyribonucleotide)m = (deoxyribonucleotide)n+m + AMP + beta-nicotinamide D-nucleotide.. Its function is as follows. DNA ligase that catalyzes the formation of phosphodiester linkages between 5'-phosphoryl and 3'-hydroxyl groups in double-stranded DNA using NAD as a coenzyme and as the energy source for the reaction. It is essential for DNA replication and repair of damaged DNA. In Sulfurimonas denitrificans (strain ATCC 33889 / DSM 1251) (Thiomicrospira denitrificans (strain ATCC 33889 / DSM 1251)), this protein is DNA ligase.